Consider the following 83-residue polypeptide: Three-finger toxin MALT0058C (83 aa).

Residues 1 to 21 (MKTLLLTLVVVTIVCLDFGHT) form the signal peptide. 4 cysteine pairs are disulfide-bonded: Cys-24/Cys-45, Cys-38/Cys-62, Cys-64/Cys-75, and Cys-76/Cys-81.

Belongs to the three-finger toxin family. Short-chain subfamily. Type I alpha-neurotoxin sub-subfamily. As to expression, expressed by the venom gland.

It is found in the secreted. Binds to muscle nicotinic acetylcholine receptor (nAChR) and inhibits acetylcholine from binding to the receptor, thereby impairing neuromuscular transmission. The polypeptide is Three-finger toxin MALT0058C (Micrurus altirostris (Uruguayan coral snake)).